Reading from the N-terminus, the 109-residue chain is UPF0482 protein ESA_01750 (109 aa).

The N-terminal stretch at 1-24 is a signal peptide; sequence MNKFLRHSLLLALLTGALSGVANA. Residues 38-55 show a composition bias toward basic and acidic residues; it reads RTRQDAAMDKEQWNDTRS. The interval 38-63 is disordered; that stretch reads RTRQDAAMDKEQWNDTRSLRQKVNKR.

The protein belongs to the UPF0482 family.

The protein is UPF0482 protein ESA_01750 of Cronobacter sakazakii (strain ATCC BAA-894) (Enterobacter sakazakii).